A 264-amino-acid chain; its full sequence is 5'-nucleotidase SurE (264 aa).

4 residues coordinate a divalent metal cation: D8, D9, S41, and N98.

It belongs to the SurE nucleotidase family. Requires a divalent metal cation as cofactor.

Its subcellular location is the cytoplasm. The enzyme catalyses a ribonucleoside 5'-phosphate + H2O = a ribonucleoside + phosphate. Functionally, nucleotidase that shows phosphatase activity on nucleoside 5'-monophosphates. This Carboxydothermus hydrogenoformans (strain ATCC BAA-161 / DSM 6008 / Z-2901) protein is 5'-nucleotidase SurE.